A 204-amino-acid chain; its full sequence is Holliday junction branch migration complex subunit RuvA (204 aa).

Residues 1-64 (MIGRLRGVVI…EDAQLLYGFN (64 aa)) are domain I. The domain II stretch occupies residues 65-143 (HKQERALFRE…GWVSHDLFSP (79 aa)). A flexible linker region spans residues 144-155 (AEISLPARESVL). Positions 156–204 (RAPDSSEEAASALVALGYKPQQASQIVSKIAKEGMSVEDIIRESLRSLV) are domain III.

The protein belongs to the RuvA family. Homotetramer. Forms an RuvA(8)-RuvB(12)-Holliday junction (HJ) complex. HJ DNA is sandwiched between 2 RuvA tetramers; dsDNA enters through RuvA and exits via RuvB. An RuvB hexamer assembles on each DNA strand where it exits the tetramer. Each RuvB hexamer is contacted by two RuvA subunits (via domain III) on 2 adjacent RuvB subunits; this complex drives branch migration. In the full resolvosome a probable DNA-RuvA(4)-RuvB(12)-RuvC(2) complex forms which resolves the HJ.

Its subcellular location is the cytoplasm. In terms of biological role, the RuvA-RuvB-RuvC complex processes Holliday junction (HJ) DNA during genetic recombination and DNA repair, while the RuvA-RuvB complex plays an important role in the rescue of blocked DNA replication forks via replication fork reversal (RFR). RuvA specifically binds to HJ cruciform DNA, conferring on it an open structure. The RuvB hexamer acts as an ATP-dependent pump, pulling dsDNA into and through the RuvAB complex. HJ branch migration allows RuvC to scan DNA until it finds its consensus sequence, where it cleaves and resolves the cruciform DNA. The chain is Holliday junction branch migration complex subunit RuvA from Aeromonas salmonicida (strain A449).